The chain runs to 97 residues: Co-chaperonin GroES (97 aa).

Belongs to the GroES chaperonin family. Heptamer of 7 subunits arranged in a ring. Interacts with the chaperonin GroEL.

Its subcellular location is the cytoplasm. Together with the chaperonin GroEL, plays an essential role in assisting protein folding. The GroEL-GroES system forms a nano-cage that allows encapsulation of the non-native substrate proteins and provides a physical environment optimized to promote and accelerate protein folding. GroES binds to the apical surface of the GroEL ring, thereby capping the opening of the GroEL channel. The chain is Co-chaperonin GroES from Yersinia enterocolitica.